We begin with the raw amino-acid sequence, 1212 residues long: Peregrin (1212 aa).

Residues 21 to 47 form a C2H2-type zinc finger; that stretch reads YECPVETCRKVYKSYSGIEYHLYHYDH. 2 disordered regions span residues 43-87 and 118-176; these read YHYD…SPGR and VVSE…PKLP. Residues 58–67 show a composition bias toward basic residues; it reads LRKHKKKGRQ. The interval 59 to 221 is interaction with KAT6A and KAT6B; the sequence is RKHKKKGRQS…VEYDMDEEDY (163 aa). Over residues 74–85 the composition is skewed to low complexity; that stretch reads QSPSPSEVSQSP. A compositionally biased stretch (acidic residues) spans 119 to 130; the sequence is VSEDEEAPEEAP. At Ser120 the chain carries Phosphoserine. Lys147 is subject to N6-acetyllysine. A compositionally biased stretch (basic residues) spans 148–166; it reads SGKHKNKEKRKDSNHHHHS. Ser237 is subject to Phosphoserine. A PHD-type 1 zinc finger spans residues 272–322; that stretch reads DAVCCICNDGECQNSNVILFCDMCNLAVHQECYGVPYIPEGQWLCRRCLQS. The C2HC pre-PHD-type zinc-finger motif lies at 326–359; sequence AVDCALCPNKGGAFKQTDDGRWAHVVCALWIPEV. The PHD-type 2 zinc finger occupies 383–447; the sequence is LTCYICKQRG…RKTAYCDIHT (65 aa). The disordered stretch occupies residues 447–489; it reads TPPGSARRLPALSHSEGEEEEDEEEDEGKSWSSEKVKKAKAKS. Phosphoserine is present on residues Ser459 and Ser461. Over residues 463 to 473 the composition is skewed to acidic residues; it reads GEEEEDEEEDE. An interaction with MEAF6 and ING5 region spans residues 500–819; it reads LAEKRAAAPV…IKKEMTALRR (320 aa). The segment at 542-1077 is required for RUNX1 and RUNX2 transcriptional activation; sequence YWTLKRQSRN…RGAGWLSEDE (536 aa). Lys579 bears the N6-acetyllysine mark. Residues 627–731 form the Bromo domain; the sequence is MQLTPFLILL…EQGGAVLRQA (105 aa). Residues 817-1060 form a disordered region; that stretch reads LRRKLAHQRE…VGTGRGVGHS (244 aa). Basic and acidic residues predominate over residues 823 to 836; the sequence is HQRETGRDGPERHG. Thr856 is modified (phosphothreonine). A compositionally biased stretch (low complexity) spans 856–869; sequence TDSAAEESSSQETS. Phosphoserine occurs at positions 858, 915, 920, and 924. A compositionally biased stretch (low complexity) spans 993-1019; the sequence is PRSSSDSESSSSSSSSAASDRTSTTPS. Position 1074 is a phosphoserine (Ser1074). Residues 1083-1166 enclose the PWWP domain; sequence ALDLVWAKCR…RTKLVPLGVN (84 aa). The residue at position 1185 (Ser1185) is a Phosphoserine.

In terms of assembly, component of some HBO1 complex composed of KAT7/HBO1, MEAF6, ING5, and BRPF1. Component of the MOZ/MORF complex composed at least of ING5, KAT6A, KAT6B, MEAF6 and one of BRPF1, BRD1/BRPF2 and BRPF3. Interacts (via PHD-type zinc finger domains) with unmethylated histone H3 at 'Lys-4' (H3K4me0). Interacts with trimethylated 'Lys-36' of histone H3 (H3K36me3). Interacts with ING5; interaction directs BRPF1 to H4K4me3-enriched chromatin at the 5' of active genes. Interacts with KAT7. Post-translationally, acetylated by KAT6A. In terms of tissue distribution, expressed at low level in most tissues, with high expression in the testis and specific regions of the brain.

The protein resides in the nucleus. Its subcellular location is the chromosome. It is found in the cytoplasm. In terms of biological role, scaffold subunit of various histone acetyltransferase (HAT) complexes, such as the MOZ/MORF and HBO1 complexes, which have a histone H3 acetyltransferase activity. Plays a key role in HBO1 complex by directing KAT7/HBO1 specificity towards histone H3 'Lys-14' acetylation (H3K14ac). Some HAT complexes preferentially mediate histone H3 'Lys-23' (H3K23ac) acetylation. Positively regulates the transcription of RUNX1 and RUNX2. The chain is Peregrin from Mus musculus (Mouse).